A 394-amino-acid chain; its full sequence is Enoyl-[acyl-carrier-protein] reductase [NADH] (394 aa).

NAD(+) is bound by residues 48–53 (GASTGY), 74–75 (YE), 111–112 (DA), and 139–140 (LA). Residue tyrosine 225 participates in substrate binding. Residue tyrosine 235 is the Proton donor of the active site. NAD(+) contacts are provided by residues lysine 244 and 273-275 (LVT).

This sequence belongs to the TER reductase family. Monomer.

It catalyses the reaction a 2,3-saturated acyl-[ACP] + NAD(+) = a (2E)-enoyl-[ACP] + NADH + H(+). It functions in the pathway lipid metabolism; fatty acid biosynthesis. In terms of biological role, involved in the final reduction of the elongation cycle of fatty acid synthesis (FAS II). Catalyzes the reduction of a carbon-carbon double bond in an enoyl moiety that is covalently linked to an acyl carrier protein (ACP). The polypeptide is Enoyl-[acyl-carrier-protein] reductase [NADH] (Opitutus terrae (strain DSM 11246 / JCM 15787 / PB90-1)).